A 647-amino-acid polypeptide reads, in one-letter code: Threonine--tRNA ligase (647 aa).

The TGS domain occupies 1–61 (MIKITFPDGA…EEDGSIEIVT (61 aa)). The interval 240 to 538 (DHRKLGKELD…LIETYKGAFP (299 aa)) is catalytic. The Zn(2+) site is built by Cys-334, His-385, and His-515.

Belongs to the class-II aminoacyl-tRNA synthetase family. In terms of assembly, homodimer. It depends on Zn(2+) as a cofactor.

It is found in the cytoplasm. It carries out the reaction tRNA(Thr) + L-threonine + ATP = L-threonyl-tRNA(Thr) + AMP + diphosphate + H(+). Catalyzes the attachment of threonine to tRNA(Thr) in a two-step reaction: L-threonine is first activated by ATP to form Thr-AMP and then transferred to the acceptor end of tRNA(Thr). Also edits incorrectly charged L-seryl-tRNA(Thr). This Streptococcus pyogenes serotype M28 (strain MGAS6180) protein is Threonine--tRNA ligase.